Consider the following 216-residue polypeptide: Golgi to ER traffic protein 1 (216 aa).

At 1 to 9 (MFDISSSNL) the chain is on the lumenal side. The helical transmembrane segment at 10 to 29 (LISVLVVLFAKQLINAVGKA) threads the bilayer. Over 30–116 (TLENIGWSAY…YISKYIGYMI (87 aa)) the chain is Cytoplasmic. The stretch at 54–105 (LDQKNVELAKVSKERKSISAQDQYARWTKLNRQFDKLTGEINKLKEETSASR) forms a coiled coil. A helical transmembrane segment spans residues 117–137 (LVTTTLPIWFFRVWFRKAVLF). Residues 138–161 (YFPTGVLPHYLEWFLALPFITTGG) are Lumenal-facing. The helical transmembrane segment at 162-178 (VGLTIWMSAVNNVVSSV) threads the bilayer. Residues 179 to 216 (IFLVKFPFEKEVPFPSKEVGNEKTSINKEEVSGTPAAN) are Cytoplasmic-facing. The tract at residues 193 to 216 (PSKEVGNEKTSINKEEVSGTPAAN) is disordered. Residues 197 to 209 (VGNEKTSINKEEV) show a composition bias toward basic and acidic residues.

This sequence belongs to the WRB/GET1 family. As to quaternary structure, component of the Golgi to ER traffic (GET) complex, which is composed of GET1, GET2 and GET3. Within the complex, GET1 and GET2 form a heterotetramer which is stabilized by phosphatidylinositol binding and which binds to the GET3 homodimer.

The protein resides in the endoplasmic reticulum membrane. Its subcellular location is the golgi apparatus membrane. Functionally, required for the post-translational delivery of tail-anchored (TA) proteins to the endoplasmic reticulum. Together with GET2, acts as a membrane receptor for soluble GET3, which recognizes and selectively binds the transmembrane domain of TA proteins in the cytosol. The GET complex cooperates with the HDEL receptor ERD2 to mediate the ATP-dependent retrieval of resident ER proteins that contain a C-terminal H-D-E-L retention signal from the Golgi to the ER. This is Golgi to ER traffic protein 1 from Debaryomyces hansenii (strain ATCC 36239 / CBS 767 / BCRC 21394 / JCM 1990 / NBRC 0083 / IGC 2968) (Yeast).